The chain runs to 417 residues: NADH-quinone oxidoreductase subunit D (417 aa).

It belongs to the complex I 49 kDa subunit family. NDH-1 is composed of 14 different subunits. Subunits NuoB, C, D, E, F, and G constitute the peripheral sector of the complex.

The protein localises to the cell inner membrane. The catalysed reaction is a quinone + NADH + 5 H(+)(in) = a quinol + NAD(+) + 4 H(+)(out). NDH-1 shuttles electrons from NADH, via FMN and iron-sulfur (Fe-S) centers, to quinones in the respiratory chain. The immediate electron acceptor for the enzyme in this species is believed to be ubiquinone. Couples the redox reaction to proton translocation (for every two electrons transferred, four hydrogen ions are translocated across the cytoplasmic membrane), and thus conserves the redox energy in a proton gradient. The protein is NADH-quinone oxidoreductase subunit D of Herminiimonas arsenicoxydans.